The primary structure comprises 914 residues: Valine--tRNA ligase (914 aa).

A 'HIGH' region motif is present at residues 47–57; it reads PYPTGELHMGH. Residues 552–556 carry the 'KMSKS' region motif; that stretch reads KMSKS. Lysine 555 contacts ATP.

The protein belongs to the class-I aminoacyl-tRNA synthetase family. ValS type 2 subfamily.

The protein localises to the cytoplasm. The enzyme catalyses tRNA(Val) + L-valine + ATP = L-valyl-tRNA(Val) + AMP + diphosphate. Functionally, catalyzes the attachment of valine to tRNA(Val). As ValRS can inadvertently accommodate and process structurally similar amino acids such as threonine, to avoid such errors, it has a 'posttransfer' editing activity that hydrolyzes mischarged Thr-tRNA(Val) in a tRNA-dependent manner. The polypeptide is Valine--tRNA ligase (Methanopyrus kandleri (strain AV19 / DSM 6324 / JCM 9639 / NBRC 100938)).